A 544-amino-acid polypeptide reads, in one-letter code: Chaperonin GroEL 1 (544 aa).

Residues 29–32 (TLGP), 86–90 (DGTTT), glycine 413, and aspartate 495 contribute to the ATP site. Residues 525-544 (PEPKTNTPASSGSGMSDYDY) are disordered. Residues 528–538 (KTNTPASSGSG) show a composition bias toward polar residues.

Belongs to the chaperonin (HSP60) family. In terms of assembly, forms a cylinder of 14 subunits composed of two heptameric rings stacked back-to-back. Interacts with the co-chaperonin GroES.

The protein resides in the cytoplasm. The enzyme catalyses ATP + H2O + a folded polypeptide = ADP + phosphate + an unfolded polypeptide.. Together with its co-chaperonin GroES, plays an essential role in assisting protein folding. The GroEL-GroES system forms a nano-cage that allows encapsulation of the non-native substrate proteins and provides a physical environment optimized to promote and accelerate protein folding. In Synechococcus sp. (strain JA-2-3B'a(2-13)) (Cyanobacteria bacterium Yellowstone B-Prime), this protein is Chaperonin GroEL 1.